We begin with the raw amino-acid sequence, 181 residues long: Oligoribonuclease (181 aa).

The region spanning 8–171 is the Exonuclease domain; that stretch reads LVWIDMEMTG…DDIRESIAEL (164 aa). Y129 is a catalytic residue.

The protein belongs to the oligoribonuclease family.

It is found in the cytoplasm. Functionally, 3'-to-5' exoribonuclease specific for small oligoribonucleotides. The protein is Oligoribonuclease of Aeromonas hydrophila subsp. hydrophila (strain ATCC 7966 / DSM 30187 / BCRC 13018 / CCUG 14551 / JCM 1027 / KCTC 2358 / NCIMB 9240 / NCTC 8049).